The chain runs to 173 residues: Secreted RxLR effector protein RXLR-C12 (173 aa).

A signal peptide spans 1-18 (MLQFATAFLAISANVVMT). Positions 41 to 55 (RRLRTHEIGTVPEER) match the RxLR-dEER motif. Asn155 carries N-linked (GlcNAc...) asparagine glycosylation.

The protein belongs to the RxLR effector family.

The protein localises to the secreted. It is found in the host cytoplasm. The protein resides in the host nucleus. Secreted effector that suppresses pattern-triggered immunity (PTI) in plant host. The protein is Secreted RxLR effector protein RXLR-C12 of Plasmopara halstedii (Downy mildew of sunflower).